The sequence spans 840 residues: Phosphatidylinositol-glycan-specific phospholipase D (840 aa).

A signal peptide spans 1–23; sequence MSAFRLWPGLLIMLGSLCHRGSP. N-linked (GlcNAc...) asparagine glycosylation is found at N94, N271, N292, N307, and N321. FG-GAP repeat units lie at residues 367 to 428, 436 to 497, 499 to 559, 563 to 623, 633 to 693, 704 to 770, and 788 to 840; these read SPLA…GLPP, EAHR…GGMS, SPNI…LSDK, NVEA…SLGR, QSWF…GATR, LLLS…TLGD, and QYVL…LGSD. N501, N568, N591, N604, and N659 each carry an N-linked (GlcNAc...) asparagine glycan.

The protein belongs to the GPLD1 family. In terms of assembly, monomer.

It is found in the secreted. It carries out the reaction a 6-(alpha-D-glucosaminyl)-1-(1,2-diacyl-sn-glycero-3-phospho)-1D-myo-inositol + H2O = 6-(alpha-D-glucosaminyl)-1D-myo-inositol + a 1,2-diacyl-sn-glycero-3-phosphate + H(+). In terms of biological role, this protein hydrolyzes the inositol phosphate linkage in proteins anchored by phosphatidylinositol glycans (GPI-anchor) thus releasing these proteins from the membrane. This is Phosphatidylinositol-glycan-specific phospholipase D (GPLD1) from Homo sapiens (Human).